Here is a 508-residue protein sequence, read N- to C-terminus: Light-independent protochlorophyllide reductase subunit B (508 aa).

Position 36 (aspartate 36) interacts with [4Fe-4S] cluster. Aspartate 294 functions as the Proton donor in the catalytic mechanism. 429 to 430 (GM) is a substrate binding site.

It belongs to the ChlB/BchB/BchZ family. Protochlorophyllide reductase is composed of three subunits; ChlL, ChlN and ChlB. Forms a heterotetramer of two ChlB and two ChlN subunits. Requires [4Fe-4S] cluster as cofactor.

The enzyme catalyses chlorophyllide a + oxidized 2[4Fe-4S]-[ferredoxin] + 2 ADP + 2 phosphate = protochlorophyllide a + reduced 2[4Fe-4S]-[ferredoxin] + 2 ATP + 2 H2O. It functions in the pathway porphyrin-containing compound metabolism; chlorophyll biosynthesis (light-independent). Its function is as follows. Component of the dark-operative protochlorophyllide reductase (DPOR) that uses Mg-ATP and reduced ferredoxin to reduce ring D of protochlorophyllide (Pchlide) to form chlorophyllide a (Chlide). This reaction is light-independent. The NB-protein (ChlN-ChlB) is the catalytic component of the complex. The chain is Light-independent protochlorophyllide reductase subunit B from Crocosphaera subtropica (strain ATCC 51142 / BH68) (Cyanothece sp. (strain ATCC 51142)).